Reading from the N-terminus, the 203-residue chain is uncharacterized protein (203 aa).

2 disordered regions span residues 65–84 and 92–170; these read LSLSEDEDEDESELEDSFDS and SSSS…ETAL. 2 stretches are compositionally biased toward acidic residues: residues 68 to 82 and 98 to 110; these read SEDEDEDESELEDSF and SEEESEEEEEESL. The segment covering 111–122 has biased composition (low complexity); the sequence is DSSFLVSASLSL. A compositionally biased stretch (acidic residues) spans 123–168; it reads SEDDEEEDSESEDEDEDEDSDSDSDSDSDSDEDEDEDEDSEEEEET. Residues 182–202 form a helical membrane-spanning segment; that stretch reads TSFLLPFTLVVLAILFYPAWV.

It is found in the membrane. This is an uncharacterized protein from Saccharomyces cerevisiae (strain ATCC 204508 / S288c) (Baker's yeast).